Reading from the N-terminus, the 260-residue chain is Neuraminyllactose-binding hemagglutinin (260 aa).

The N-terminal stretch at Met-1–Gly-27 is a signal peptide. The N-palmitoyl cysteine moiety is linked to residue Cys-28. Residue Cys-28 is the site of S-diacylglycerol cysteine attachment.

The protein resides in the cell outer membrane. The polypeptide is Neuraminyllactose-binding hemagglutinin (hpaA) (Helicobacter pylori (strain J99 / ATCC 700824) (Campylobacter pylori J99)).